Consider the following 90-residue polypeptide: DNA-directed RNA polymerase subunit omega (90 aa).

Residues 69-90 (RQEQQEQEAAELAAVSSIAHNR) are disordered.

The protein belongs to the RNA polymerase subunit omega family. In terms of assembly, the RNAP catalytic core consists of 2 alpha, 1 beta, 1 beta' and 1 omega subunit. When a sigma factor is associated with the core the holoenzyme is formed, which can initiate transcription.

The catalysed reaction is RNA(n) + a ribonucleoside 5'-triphosphate = RNA(n+1) + diphosphate. Functionally, promotes RNA polymerase assembly. Latches the N- and C-terminal regions of the beta' subunit thereby facilitating its interaction with the beta and alpha subunits. This Vibrio parahaemolyticus serotype O3:K6 (strain RIMD 2210633) protein is DNA-directed RNA polymerase subunit omega.